We begin with the raw amino-acid sequence, 129 residues long: Large ribosomal subunit protein uL22 (129 aa).

It belongs to the universal ribosomal protein uL22 family. Part of the 50S ribosomal subunit.

In terms of biological role, this protein binds specifically to 23S rRNA; its binding is stimulated by other ribosomal proteins, e.g. L4, L17, and L20. It is important during the early stages of 50S assembly. It makes multiple contacts with different domains of the 23S rRNA in the assembled 50S subunit and ribosome. Functionally, the globular domain of the protein is located near the polypeptide exit tunnel on the outside of the subunit, while an extended beta-hairpin is found that lines the wall of the exit tunnel in the center of the 70S ribosome. This is Large ribosomal subunit protein uL22 from Phytoplasma sp. (strain STRAWB2).